The chain runs to 359 residues: tRNA-specific 2-thiouridylase MnmA (359 aa).

ATP is bound by residues 11 to 18 and Ile37; that span reads GISGGVDS. Residue Cys99 is the Nucleophile of the active site. Residues Cys99 and Cys195 are joined by a disulfide bond. Gly123 contacts ATP. The segment at 145 to 147 is interaction with tRNA; sequence KDQ. Residue Cys195 is the Cysteine persulfide intermediate of the active site. Positions 304–305 are interaction with tRNA; sequence RY.

The protein belongs to the MnmA/TRMU family.

The protein resides in the cytoplasm. The enzyme catalyses S-sulfanyl-L-cysteinyl-[protein] + uridine(34) in tRNA + AH2 + ATP = 2-thiouridine(34) in tRNA + L-cysteinyl-[protein] + A + AMP + diphosphate + H(+). In terms of biological role, catalyzes the 2-thiolation of uridine at the wobble position (U34) of tRNA, leading to the formation of s(2)U34. The chain is tRNA-specific 2-thiouridylase MnmA from Chlorobium phaeobacteroides (strain BS1).